The following is a 319-amino-acid chain: Fructokinase (319 aa).

The protein belongs to the carbohydrate kinase PfkB family. As to expression, expressed in swelling stolons and, at higher levels, in developing tubers. Low levels found in leaves and stems from tuberizing plants.

The catalysed reaction is D-fructose + ATP = D-fructose 6-phosphate + ADP + H(+). It participates in glycan biosynthesis; starch biosynthesis. May play an important role in maintaining the flux of carbon towards starch formation. This is Fructokinase from Solanum tuberosum (Potato).